A 334-amino-acid polypeptide reads, in one-letter code: Triplex capsid protein 1 (334 aa).

It belongs to the herpesviridae TRX1 protein family. In terms of assembly, interacts with TRX2, MCP and capsid vertex component 2/CVC2.

The protein resides in the virion. Its subcellular location is the host nucleus. Its function is as follows. Structural component of the T=16 icosahedral capsid. The capsid is composed of pentamers and hexamers of major capsid protein/MCP, which are linked together by heterotrimers called triplexes. These triplexes are formed by a single molecule of triplex protein 1/TRX1 and two copies of triplex protein 2/TRX2. Additionally, TRX1 is required for efficient transport of TRX2 to the nucleus, which is the site of capsid assembly. The protein is Triplex capsid protein 1 of Connochaetes taurinus (Blue wildebeest).